The sequence spans 205 residues: RNA pyrophosphohydrolase (205 aa).

In terms of domain architecture, Nudix hydrolase spans 6–149 (GFRPNVGIVL…KRGVYARALR (144 aa)). Residues 38–59 (GGMNTDETPVEAMYRELREETG) carry the Nudix box motif. Residues 177–205 (PGSSAAGHDSPRKRPRKRSGARPMRINND) form a disordered region. Over residues 187–196 (PRKRPRKRSG) the composition is skewed to basic residues.

This sequence belongs to the Nudix hydrolase family. RppH subfamily. A divalent metal cation is required as a cofactor.

In terms of biological role, accelerates the degradation of transcripts by removing pyrophosphate from the 5'-end of triphosphorylated RNA, leading to a more labile monophosphorylated state that can stimulate subsequent ribonuclease cleavage. The sequence is that of RNA pyrophosphohydrolase from Xanthomonas oryzae pv. oryzae (strain MAFF 311018).